The chain runs to 237 residues: MKSLSFLNHEFEAFPSPELALNDPNGLLAIGGDLRPERLLSAYYNGIFPWFNSDDPILWWSPDPRAVFIPGEVHISTSLRKYLKKQPWRITINHAFTDVMAGCAQPREKQSGTWITQEIQMAYRELHHTGHAHSIEVWEGERLIGGLYGLAIGQVFCGESMFHRKTNASKAAVAALQQHLLKMGFKLIDAQVMNPHLESLGAKGIKRIDFITLLRELRNNPVDPATWTTKEVILELE.

This sequence belongs to the L/F-transferase family.

The protein resides in the cytoplasm. The enzyme catalyses N-terminal L-lysyl-[protein] + L-leucyl-tRNA(Leu) = N-terminal L-leucyl-L-lysyl-[protein] + tRNA(Leu) + H(+). The catalysed reaction is N-terminal L-arginyl-[protein] + L-leucyl-tRNA(Leu) = N-terminal L-leucyl-L-arginyl-[protein] + tRNA(Leu) + H(+). It carries out the reaction L-phenylalanyl-tRNA(Phe) + an N-terminal L-alpha-aminoacyl-[protein] = an N-terminal L-phenylalanyl-L-alpha-aminoacyl-[protein] + tRNA(Phe). Its function is as follows. Functions in the N-end rule pathway of protein degradation where it conjugates Leu, Phe and, less efficiently, Met from aminoacyl-tRNAs to the N-termini of proteins containing an N-terminal arginine or lysine. In Shewanella baltica (strain OS185), this protein is Leucyl/phenylalanyl-tRNA--protein transferase.